The primary structure comprises 204 residues: dITP/XTP pyrophosphatase (204 aa).

Residue 8 to 13 (TKNAGK) coordinates substrate. The active-site Proton acceptor is aspartate 70. A Mg(2+)-binding site is contributed by aspartate 70. Substrate contacts are provided by residues serine 71, 153-156 (FGYD), lysine 176, and 181-182 (HR).

This sequence belongs to the HAM1 NTPase family. As to quaternary structure, homodimer. It depends on Mg(2+) as a cofactor.

The enzyme catalyses XTP + H2O = XMP + diphosphate + H(+). The catalysed reaction is dITP + H2O = dIMP + diphosphate + H(+). It carries out the reaction ITP + H2O = IMP + diphosphate + H(+). Functionally, pyrophosphatase that catalyzes the hydrolysis of nucleoside triphosphates to their monophosphate derivatives, with a high preference for the non-canonical purine nucleotides XTP (xanthosine triphosphate), dITP (deoxyinosine triphosphate) and ITP. Seems to function as a house-cleaning enzyme that removes non-canonical purine nucleotides from the nucleotide pool, thus preventing their incorporation into DNA/RNA and avoiding chromosomal lesions. This Geobacillus kaustophilus (strain HTA426) protein is dITP/XTP pyrophosphatase.